The sequence spans 398 residues: Elongation factor Tu (398 aa).

A tr-type G domain is found at 10–207 (KPHVNIGTIG…TVDEYIPEPE (198 aa)). A G1 region spans residues 19–26 (GHVDHGKT). Position 19-26 (19-26 (GHVDHGKT)) interacts with GTP. Thr-26 contacts Mg(2+). The tract at residues 63 to 67 (GITIN) is G2. The G3 stretch occupies residues 84 to 87 (DAPG). Residues 84–88 (DAPGH) and 139–142 (NKVD) each bind GTP. The tract at residues 139–142 (NKVD) is G4. Residues 177 to 179 (SAL) are G5.

It belongs to the TRAFAC class translation factor GTPase superfamily. Classic translation factor GTPase family. EF-Tu/EF-1A subfamily. In terms of assembly, monomer.

It is found in the cytoplasm. It carries out the reaction GTP + H2O = GDP + phosphate + H(+). In terms of biological role, GTP hydrolase that promotes the GTP-dependent binding of aminoacyl-tRNA to the A-site of ribosomes during protein biosynthesis. The sequence is that of Elongation factor Tu from Streptococcus thermophilus (strain CNRZ 1066).